The primary structure comprises 90 residues: UPF0367 protein Ava_2513 (90 aa).

Belongs to the UPF0367 family.

This chain is UPF0367 protein Ava_2513, found in Trichormus variabilis (strain ATCC 29413 / PCC 7937) (Anabaena variabilis).